The chain runs to 146 residues: MKIESPVFGSAEVSDDKVIEFPAGLPGFEHCKRFVLVHEEGSDTAVFLLQSVDDADVAFSITGPEQLGINYEFALSDEEVATLGLASPAEALVAVIVRKDGEAGSPASTGLRANFMAPLVINVEGRRGLQKVINRLGCDIVLRERA.

It belongs to the FliW family. Interacts with translational regulator CsrA and flagellin(s).

It is found in the cytoplasm. In terms of biological role, acts as an anti-CsrA protein, binds CsrA and prevents it from repressing translation of its target genes, one of which is flagellin. Binds to flagellin and participates in the assembly of the flagellum. This chain is Flagellar assembly factor FliW, found in Azoarcus sp. (strain BH72).